A 309-amino-acid chain; its full sequence is Acetylglutamate kinase (309 aa).

Substrate is bound by residues Gly-82–Gly-83, Arg-104, and Asn-206.

It belongs to the acetylglutamate kinase family. ArgB subfamily.

Its subcellular location is the cytoplasm. It catalyses the reaction N-acetyl-L-glutamate + ATP = N-acetyl-L-glutamyl 5-phosphate + ADP. It functions in the pathway amino-acid biosynthesis; L-arginine biosynthesis; N(2)-acetyl-L-ornithine from L-glutamate: step 2/4. In terms of biological role, catalyzes the ATP-dependent phosphorylation of N-acetyl-L-glutamate. The protein is Acetylglutamate kinase of Cupriavidus pinatubonensis (strain JMP 134 / LMG 1197) (Cupriavidus necator (strain JMP 134)).